A 387-amino-acid polypeptide reads, in one-letter code: uncharacterized protein (387 aa).

The first 27 residues, 1–27, serve as a signal peptide directing secretion; the sequence is MKKWMITIAMLILAGIALFVFISPLKS.

This is an uncharacterized protein from Bacillus subtilis (strain 168).